The sequence spans 61 residues: Large ribosomal subunit protein uL30 (61 aa).

The protein belongs to the universal ribosomal protein uL30 family. As to quaternary structure, part of the 50S ribosomal subunit.

This is Large ribosomal subunit protein uL30 from Legionella pneumophila (strain Paris).